The following is a 148-amino-acid chain: Ribonuclease H (148 aa).

An RNase H type-1 domain is found at 2–143; it reads TADIIYIYSD…ADVLANQGVL (142 aa). Mg(2+)-binding residues include Asp11, Glu49, Asp71, and Asp135.

It belongs to the RNase H family. In terms of assembly, monomer. Mg(2+) serves as cofactor.

Its subcellular location is the cytoplasm. It catalyses the reaction Endonucleolytic cleavage to 5'-phosphomonoester.. Endonuclease that specifically degrades the RNA of RNA-DNA hybrids. The sequence is that of Ribonuclease H from Thiobacillus denitrificans (strain ATCC 25259 / T1).